Consider the following 547-residue polypeptide: Threonylcarbamoyladenosine tRNA methylthiotransferase (547 aa).

The disordered stretch occupies residues 30–51 (ARKSVVPRARKHKQETGEQMQT). An MTTase N-terminal domain is found at 59–167 (QKVWLKTWGC…VVEVVDEAIK (109 aa)). Residues Cys-68, Cys-104, Cys-133, Cys-209, Cys-213, and Cys-216 each contribute to the [4Fe-4S] cluster site. One can recognise a Radical SAM core domain in the interval 195–426 (RKNPLIEIIS…ALFHSYRPYD (232 aa)). Positions 426-488 (DHKMGEQQQV…KHYMKGRPLE (63 aa)) constitute a TRAM domain. A helical membrane pass occupies residues 527-547 (ILAVVLLLSAVLLALLMEKLL).

The protein belongs to the methylthiotransferase family. CDKAL1 subfamily. [4Fe-4S] cluster serves as cofactor.

It is found in the endoplasmic reticulum membrane. It catalyses the reaction N(6)-L-threonylcarbamoyladenosine(37) in tRNA + (sulfur carrier)-SH + AH2 + 2 S-adenosyl-L-methionine = 2-methylsulfanyl-N(6)-L-threonylcarbamoyladenosine(37) in tRNA + (sulfur carrier)-H + 5'-deoxyadenosine + L-methionine + A + S-adenosyl-L-homocysteine + 2 H(+). Its function is as follows. Catalyzes the methylthiolation of N6-threonylcarbamoyladenosine (t(6)A), leading to the formation of 2-methylthio-N6-threonylcarbamoyladenosine (ms(2)t(6)A) at position 37 in tRNAs that read codons beginning with adenine. This Danio rerio (Zebrafish) protein is Threonylcarbamoyladenosine tRNA methylthiotransferase (cdkal1).